Reading from the N-terminus, the 1447-residue chain is DNA-directed RNA polymerase subunit beta' (1447 aa).

4 residues coordinate Zn(2+): Cys-70, Cys-72, Cys-85, and Cys-88. Positions 460, 462, and 464 each coordinate Mg(2+). The Zn(2+) site is built by Cys-890, Cys-964, Cys-971, and Cys-974.

This sequence belongs to the RNA polymerase beta' chain family. As to quaternary structure, the RNAP catalytic core consists of 2 alpha, 1 beta, 1 beta' and 1 omega subunit. When a sigma factor is associated with the core the holoenzyme is formed, which can initiate transcription. It depends on Mg(2+) as a cofactor. Zn(2+) is required as a cofactor.

The catalysed reaction is RNA(n) + a ribonucleoside 5'-triphosphate = RNA(n+1) + diphosphate. In terms of biological role, DNA-dependent RNA polymerase catalyzes the transcription of DNA into RNA using the four ribonucleoside triphosphates as substrates. The polypeptide is DNA-directed RNA polymerase subunit beta' (Desulfosudis oleivorans (strain DSM 6200 / JCM 39069 / Hxd3) (Desulfococcus oleovorans)).